Here is a 244-residue protein sequence, read N- to C-terminus: 5-oxoprolinase subunit A (244 aa).

Belongs to the LamB/PxpA family. In terms of assembly, forms a complex composed of PxpA, PxpB and PxpC.

It carries out the reaction 5-oxo-L-proline + ATP + 2 H2O = L-glutamate + ADP + phosphate + H(+). Functionally, catalyzes the cleavage of 5-oxoproline to form L-glutamate coupled to the hydrolysis of ATP to ADP and inorganic phosphate. This chain is 5-oxoprolinase subunit A, found in Shigella boydii serotype 18 (strain CDC 3083-94 / BS512).